Consider the following 307-residue polypeptide: Cyclin-dependent kinase 5 activator 1 (307 aa).

Glycine 2 carries N-myristoyl glycine lipidation. Serine 8 carries the phosphoserine; by CDK5 modification. The interval 97-133 is disordered; sequence TFAQPPPAQPPAPPASQLSGSQTGVSSSVKKAPHPAI. Residues 100–110 show a composition bias toward pro residues; it reads QPPPAQPPAPP. The span at 112 to 125 shows a compositional bias: polar residues; sequence SQLSGSQTGVSSSV. Phosphothreonine; by CDK5 is present on threonine 138.

The protein belongs to the cyclin-dependent kinase 5 activator family. In terms of assembly, heterodimer composed of a catalytic subunit CDK5 and a regulatory subunit CDK5R1 (p25) and macromolecular complex composed of at least CDK5, CDK5R1 (p35) and CDK5RAP1 or CDK5RAP2 or CDK5RAP3. Only the heterodimer shows kinase activity. Interacts with EPHA4 and NGEF; may mediate the activation of NGEF by EPHA4. Interacts with RASGRF2. The complex p35/CDK5 interacts with CLOCK. The p35 form is proteolytically cleaved by calpain, giving rise to the p25 form. P35 has a 5 to 10 fold shorter half-life compared to p25. The conversion results in deregulation of the CDK5 kinase: p25/CDK5 kinase displays an increased and altered tau phosphorylation in comparison to the p35/CDK5 kinase in vivo. Post-translationally, myristoylated. A proper myristoylation signal is essential for the proper distribution of p35. In terms of processing, phosphorylation at Ser-8 and Thr-138 by CDK5 prevents calpain-mediated proteolysis. Ubiquitinated, leading to its degradation: degradation of p35 by proteasome results in down-regulation of CDK5 activity. During this process, CDK5 phosphorylates p35 and induces its ubiquitination and subsequent degradation. Ubiquitinated by the CRL2(FEM1B) complex, which recognizes the -Gly-Leu-Asp-Arg C-degron at the C-terminus, leading to its degradation. In terms of tissue distribution, brain and neuron specific.

Its subcellular location is the cell membrane. The protein resides in the cell projection. It localises to the neuron projection. It is found in the nucleus. The protein localises to the cytoplasm. Its subcellular location is the perinuclear region. The protein resides in the perikaryon. In terms of biological role, p35 is a neuron specific activator of CDK5. The complex p35/CDK5 is required for neurite outgrowth and cortical lamination. Involved in dendritic spine morphogenesis by mediating the EFNA1-EPHA4 signaling. Activator of TPKII. The complex p35/CDK5 participates in the regulation of the circadian clock by modulating the function of CLOCK protein: phosphorylates CLOCK at 'Thr-451' and 'Thr-461' and regulates the transcriptional activity of the CLOCK-BMAL1 heterodimer in association with altered stability and subcellular distribution. This Rattus norvegicus (Rat) protein is Cyclin-dependent kinase 5 activator 1 (Cdk5r1).